Reading from the N-terminus, the 275-residue chain is Thymidylate synthase (275 aa).

138 to 139 (RR) provides a ligand contact to dUMP. C158 acts as the Nucleophile in catalysis. Residues 178–181 (RSCD), N189, and 219–221 (HIY) each bind dUMP. D181 is a binding site for (6R)-5,10-methylene-5,6,7,8-tetrahydrofolate. A274 provides a ligand contact to (6R)-5,10-methylene-5,6,7,8-tetrahydrofolate.

This sequence belongs to the thymidylate synthase family. Bacterial-type ThyA subfamily. Homodimer.

It is found in the cytoplasm. The catalysed reaction is dUMP + (6R)-5,10-methylene-5,6,7,8-tetrahydrofolate = 7,8-dihydrofolate + dTMP. It functions in the pathway pyrimidine metabolism; dTTP biosynthesis. Functionally, catalyzes the reductive methylation of 2'-deoxyuridine-5'-monophosphate (dUMP) to 2'-deoxythymidine-5'-monophosphate (dTMP) while utilizing 5,10-methylenetetrahydrofolate (mTHF) as the methyl donor and reductant in the reaction, yielding dihydrofolate (DHF) as a by-product. This enzymatic reaction provides an intracellular de novo source of dTMP, an essential precursor for DNA biosynthesis. The polypeptide is Thymidylate synthase (Fusobacterium nucleatum subsp. nucleatum (strain ATCC 25586 / DSM 15643 / BCRC 10681 / CIP 101130 / JCM 8532 / KCTC 2640 / LMG 13131 / VPI 4355)).